Here is a 199-residue protein sequence, read N- to C-terminus: Chaperone protein TorD (199 aa).

Belongs to the TorD/DmsD family. TorD subfamily.

The protein localises to the cytoplasm. Functionally, involved in the biogenesis of TorA. Acts on TorA before the insertion of the molybdenum cofactor and, as a result, probably favors a conformation of the apoenzyme that is competent for acquiring the cofactor. This is Chaperone protein TorD from Escherichia coli O127:H6 (strain E2348/69 / EPEC).